We begin with the raw amino-acid sequence, 142 residues long: Ig heavy chain V region IR2 (142 aa).

An N-terminal signal peptide occupies residues methionine 1–cysteine 19. The 114-residue stretch at glutamate 20–glycine 133 folds into the Ig-like domain.

In Rattus norvegicus (Rat), this protein is Ig heavy chain V region IR2.